Reading from the N-terminus, the 317-residue chain is Melanocyte-stimulating hormone receptor (317 aa).

Residues 1-37 (MPVQGSQRRLLGSLNSTPTATPHLGLAANQTGARCRE) are Extracellular-facing. N29 carries an N-linked (GlcNAc...) asparagine glycan. A helical membrane pass occupies residues 38 to 63 (VSIPDGLFLSLGLVSLVENVLVVTAI). Topologically, residues 64 to 72 (AKNRNLHSP) are cytoplasmic. The helical transmembrane segment at 73–93 (MYCFICCLALSDLLVSGSNML) threads the bilayer. At 94 to 118 (ETAVTLLLEAGALVARAAVVQQLDN) the chain is on the extracellular side. Residues 119 to 140 (VIDVITCSSMLSSLCFLGAIAV) traverse the membrane as a helical segment. At 141–163 (DRYISIFYALRYHSIVTLPRAQR) the chain is on the cytoplasmic side. Residues 164 to 183 (AIAAIWVASVLCSTLFIAYY) form a helical membrane-spanning segment. Topologically, residues 184–191 (DHAAVLLC) are extracellular. Residues 192–211 (LVVFFLAMLVLMAVLYVHML) traverse the membrane as a helical segment. At 212 to 240 (ARACQHAQGIARLHKRQRLAHQGFGLKGA) the chain is on the cytoplasmic side. The helical transmembrane segment at 241-266 (ATLTILLGIFFLCWGPFFLHLTLIVL) threads the bilayer. Over 267-279 (CPQHPTCSCIFKN) the chain is Extracellular. Residues 280–300 (FNLFLALIICNAIIDPLIYAF) traverse the membrane as a helical segment. Over 301 to 317 (RSQELRRTLKEVLLCSW) the chain is Cytoplasmic. A lipid anchor (S-palmitoyl cysteine) is attached at C315.

Belongs to the G-protein coupled receptor 1 family. As to quaternary structure, interacts with MGRN1, but does not undergo MGRN1-mediated ubiquitination; this interaction competes with GNAS-binding and thus inhibits agonist-induced cAMP production. Interacts with OPN3; the interaction results in a decrease in MC1R-mediated cAMP signaling and ultimately a decrease in melanin production in melanocytes. In terms of tissue distribution, expressed in the adrenal gland.

It localises to the cell membrane. Functionally, receptor for MSH (alpha, beta and gamma) and ACTH. The activity of this receptor is mediated by G proteins which activate adenylate cyclase. Mediates melanogenesis, the production of eumelanin (black/brown) and phaeomelanin (red/yellow), via regulation of cAMP signaling in melanocytes. The sequence is that of Melanocyte-stimulating hormone receptor (MC1R) from Macaca mulatta (Rhesus macaque).